The following is a 165-amino-acid chain: Putative 4-hydroxy-4-methyl-2-oxoglutarate aldolase (165 aa).

Substrate contacts are provided by residues 80 to 83 and Arg-102; that span reads GGNL. Residue Asp-103 coordinates a divalent metal cation.

Belongs to the class II aldolase/RraA-like family. Homotrimer. The cofactor is a divalent metal cation.

It carries out the reaction 4-hydroxy-4-methyl-2-oxoglutarate = 2 pyruvate. The enzyme catalyses oxaloacetate + H(+) = pyruvate + CO2. Functionally, catalyzes the aldol cleavage of 4-hydroxy-4-methyl-2-oxoglutarate (HMG) into 2 molecules of pyruvate. Also contains a secondary oxaloacetate (OAA) decarboxylase activity due to the common pyruvate enolate transition state formed following C-C bond cleavage in the retro-aldol and decarboxylation reactions. This is Putative 4-hydroxy-4-methyl-2-oxoglutarate aldolase from Cupriavidus taiwanensis (strain DSM 17343 / BCRC 17206 / CCUG 44338 / CIP 107171 / LMG 19424 / R1) (Ralstonia taiwanensis (strain LMG 19424)).